The chain runs to 435 residues: Serine hydroxymethyltransferase 2 (435 aa).

Residues L135 and 139 to 141 contribute to the (6S)-5,6,7,8-tetrahydrofolate site; that span reads GHL. K244 is subject to N6-(pyridoxal phosphate)lysine. Residue E260 participates in (6S)-5,6,7,8-tetrahydrofolate binding.

The protein belongs to the SHMT family. Homodimer. Requires pyridoxal 5'-phosphate as cofactor.

It is found in the cytoplasm. The enzyme catalyses (6R)-5,10-methylene-5,6,7,8-tetrahydrofolate + glycine + H2O = (6S)-5,6,7,8-tetrahydrofolate + L-serine. Its pathway is one-carbon metabolism; tetrahydrofolate interconversion. It participates in amino-acid biosynthesis; glycine biosynthesis; glycine from L-serine: step 1/1. In terms of biological role, catalyzes the reversible interconversion of serine and glycine with tetrahydrofolate (THF) serving as the one-carbon carrier. This reaction serves as the major source of one-carbon groups required for the biosynthesis of purines, thymidylate, methionine, and other important biomolecules. Also exhibits THF-independent aldolase activity toward beta-hydroxyamino acids, producing glycine and aldehydes, via a retro-aldol mechanism. This is Serine hydroxymethyltransferase 2 from Vibrio cholerae serotype O1 (strain ATCC 39315 / El Tor Inaba N16961).